The primary structure comprises 302 residues: Nucleotide-binding protein Bcep1808_2900 (302 aa).

8 to 15 (GISGSGKS) lines the ATP pocket. Position 57–60 (57–60 (DARS)) interacts with GTP.

It belongs to the RapZ-like family.

Its function is as follows. Displays ATPase and GTPase activities. In Burkholderia vietnamiensis (strain G4 / LMG 22486) (Burkholderia cepacia (strain R1808)), this protein is Nucleotide-binding protein Bcep1808_2900.